The sequence spans 153 residues: Superoxide dismutase [Cu-Zn] (153 aa).

Cu cation-binding residues include H45 and H47. T53 is subject to Phosphothreonine. C56 and C145 are joined by a disulfide. S59 bears the Phosphoserine mark. A Cu cation-binding site is contributed by H62. Zn(2+)-binding residues include H62, H70, H79, and D82. A Cu cation-binding site is contributed by H119.

Belongs to the Cu-Zn superoxide dismutase family. In terms of assembly, homodimer. Requires Cu cation as cofactor. The cofactor is Zn(2+).

It is found in the cytoplasm. The catalysed reaction is 2 superoxide + 2 H(+) = H2O2 + O2. Its function is as follows. Destroys radicals which are normally produced within the cells and which are toxic to biological systems. The polypeptide is Superoxide dismutase [Cu-Zn] (Drosophila melanogaster (Fruit fly)).